We begin with the raw amino-acid sequence, 220 residues long: Eukaryotic translation initiation factor 3 subunit B (220 aa).

Positions 1-94 (MPEPIAFDES…LIIELDSAAA (94 aa)) are sufficient for interaction with HCR1 and TIF32. Positions 1–220 (MPEPIAFDES…GVQAWGGERI (220 aa)) are sufficient for interaction with PIC8. In terms of domain architecture, RRM spans 37 to 120 (HFVICDGAPI…HRLAVNKLPD (84 aa)).

This sequence belongs to the eIF-3 subunit B family. As to quaternary structure, component of the eukaryotic translation initiation factor 3 (eIF-3) complex.

It is found in the cytoplasm. Its function is as follows. RNA-binding component of the eukaryotic translation initiation factor 3 (eIF-3) complex, which is involved in protein synthesis of a specialized repertoire of mRNAs and, together with other initiation factors, stimulates binding of mRNA and methionyl-tRNAi to the 40S ribosome. The eIF-3 complex specifically targets and initiates translation of a subset of mRNAs involved in cell proliferation. The sequence is that of Eukaryotic translation initiation factor 3 subunit B (TIF32) from Pichia angusta (Yeast).